We begin with the raw amino-acid sequence, 604 residues long: UvrABC system protein C (604 aa).

The 79-residue stretch at 12 to 90 (TAPGVYLMRD…IKQHQPRYNL (79 aa)) folds into the GIY-YIG domain. One can recognise a UVR domain in the interval 200 to 235 (KDLVSGFRQRMKEAAEGLHYEEAARWRDLLKAIDTT).

This sequence belongs to the UvrC family. Interacts with UvrB in an incision complex.

It localises to the cytoplasm. Its function is as follows. The UvrABC repair system catalyzes the recognition and processing of DNA lesions. UvrC both incises the 5' and 3' sides of the lesion. The N-terminal half is responsible for the 3' incision and the C-terminal half is responsible for the 5' incision. The chain is UvrABC system protein C from Trichlorobacter lovleyi (strain ATCC BAA-1151 / DSM 17278 / SZ) (Geobacter lovleyi).